A 210-amino-acid polypeptide reads, in one-letter code: Cell division protein SepF (210 aa).

A disordered region spans residues 13–78 (GFGEPTGYDY…VTSTAMNPPM (66 aa)). Over residues 22 to 31 (YDYDEMEGDD) the composition is skewed to acidic residues. Basic and acidic residues predominate over residues 47–60 (RSEEPHPRPSEPEM). Over residues 64-78 (VNTSAVTSTAMNPPM) the composition is skewed to polar residues.

Belongs to the SepF family. Homodimer. Interacts with FtsZ.

It localises to the cytoplasm. Functionally, cell division protein that is part of the divisome complex and is recruited early to the Z-ring. Probably stimulates Z-ring formation, perhaps through the cross-linking of FtsZ protofilaments. Its function overlaps with FtsA. This chain is Cell division protein SepF, found in Cyanothece sp. (strain PCC 7425 / ATCC 29141).